The chain runs to 493 residues: (+)-menthofuran synthase (493 aa).

Methionine 1 is a topological domain (cytoplasmic). A helical; Signal-anchor for type II membrane protein membrane pass occupies residues 2 to 19 (AALLVFFSVSLILLAVLF). The Lumenal portion of the chain corresponds to 20 to 493 (HKRKSSLSSR…LLVLATPRQS (474 aa)). N-linked (GlcNAc...) asparagine glycosylation is present at asparagine 169. Cysteine 434 contributes to the heme binding site.

It belongs to the cytochrome P450 family. It depends on heme as a cofactor.

Its subcellular location is the membrane. The catalysed reaction is (R)-pulegone + reduced [NADPH--hemoprotein reductase] + O2 = (R)-menthofuran + oxidized [NADPH--hemoprotein reductase] + 2 H2O + H(+). It functions in the pathway secondary metabolite biosynthesis; terpenoid biosynthesis. Monoterpene synthase that catalyzes the formation of (+)-menthofuran from (+)-pulegone. The chain is (+)-menthofuran synthase from Mentha piperita (Peppermint).